Reading from the N-terminus, the 483-residue chain is NADH-quinone oxidoreductase subunit N (483 aa).

The next 14 membrane-spanning stretches (helical) occupy residues 8-28 (INLALMLPEIVISVVAMGLLL), 45-65 (IAAGALMVAMVITLLGVGATQ), 78-98 (FAAFMKVMLYLSTLLPMVVSW), 106-126 (LGNGEYFVLTLFAMLGGMFMI), 131-151 (FLVLYLGIELLSLAIYVLAAY), 166-186 (FVLGSMASGILLYGISLIYGV), 206-226 (MLGITMGLILVVSGLSFKIAA), 241-261 (PTSVTAFMAAMPKIAAFAALF), 275-295 (WGPIMALLAVVSMGVGALAGL), 303-323 (LLAYSSIGHVGYALIGLAVGN), 330-350 (VLVYLTIYIFMNVGAFGLILV), 373-393 (LALLMAIFMFSMAGIPPLAGF), 399-419 (IFMAAIDAHMYTVAILGVLFS), and 452-472 (AIVGVSGILVVLWGILPGSLM).

Belongs to the complex I subunit 2 family. NDH-1 is composed of 14 different subunits. Subunits NuoA, H, J, K, L, M, N constitute the membrane sector of the complex.

It localises to the cell inner membrane. The enzyme catalyses a quinone + NADH + 5 H(+)(in) = a quinol + NAD(+) + 4 H(+)(out). Functionally, NDH-1 shuttles electrons from NADH, via FMN and iron-sulfur (Fe-S) centers, to quinones in the respiratory chain. The immediate electron acceptor for the enzyme in this species is believed to be ubiquinone. Couples the redox reaction to proton translocation (for every two electrons transferred, four hydrogen ions are translocated across the cytoplasmic membrane), and thus conserves the redox energy in a proton gradient. The protein is NADH-quinone oxidoreductase subunit N of Magnetococcus marinus (strain ATCC BAA-1437 / JCM 17883 / MC-1).